Reading from the N-terminus, the 415-residue chain is UDP-N-acetylglucosamine 1-carboxyvinyltransferase (415 aa).

22-23 (KN) contributes to the phosphoenolpyruvate binding site. R92 contributes to the UDP-N-acetyl-alpha-D-glucosamine binding site. C116 (proton donor) is an active-site residue. C116 bears the 2-(S-cysteinyl)pyruvic acid O-phosphothioketal mark. UDP-N-acetyl-alpha-D-glucosamine-binding positions include 121 to 125 (RPIDL), D304, and V326.

This sequence belongs to the EPSP synthase family. MurA subfamily.

Its subcellular location is the cytoplasm. The enzyme catalyses phosphoenolpyruvate + UDP-N-acetyl-alpha-D-glucosamine = UDP-N-acetyl-3-O-(1-carboxyvinyl)-alpha-D-glucosamine + phosphate. It functions in the pathway cell wall biogenesis; peptidoglycan biosynthesis. Functionally, cell wall formation. Adds enolpyruvyl to UDP-N-acetylglucosamine. This is UDP-N-acetylglucosamine 1-carboxyvinyltransferase from Halothermothrix orenii (strain H 168 / OCM 544 / DSM 9562).